The following is a 142-amino-acid chain: FAD synthase (142 aa).

ATP contacts are provided by residues 9–10, 14–17, aspartate 92, and tyrosine 119; these read TF and HPGH.

It belongs to the archaeal FAD synthase family. Homodimer. The cofactor is a divalent metal cation.

It catalyses the reaction FMN + ATP + H(+) = FAD + diphosphate. Its pathway is cofactor biosynthesis; FAD biosynthesis; FAD from FMN: step 1/1. Functionally, catalyzes the transfer of the AMP portion of ATP to flavin mononucleotide (FMN) to produce flavin adenine dinucleotide (FAD) coenzyme. The chain is FAD synthase from Halorhabdus utahensis (strain DSM 12940 / JCM 11049 / AX-2).